A 130-amino-acid polypeptide reads, in one-letter code: Small ribosomal subunit protein uS11 (130 aa).

It belongs to the universal ribosomal protein uS11 family. As to quaternary structure, part of the 30S ribosomal subunit. Interacts with proteins S7 and S18. Binds to IF-3.

Functionally, located on the platform of the 30S subunit, it bridges several disparate RNA helices of the 16S rRNA. Forms part of the Shine-Dalgarno cleft in the 70S ribosome. The chain is Small ribosomal subunit protein uS11 from Blochmanniella floridana.